Consider the following 347-residue polypeptide: Haptoglobin (347 aa).

A signal peptide spans 1–18; it reads MRALGAVVTLLLWGQLFA. Residues 31 to 88 enclose the Sushi domain; that stretch reads DSCPKPPEIANGYVEHLVRYRCRQFYRLRAEGDGVYTLNDEKQWMNTVAGEKLPECEA. Disulfide bonds link Cys-52–Cys-86, Cys-90–Cys-207, Cys-250–Cys-281, and Cys-292–Cys-322. Positions 103-345 constitute a Peptidase S1 domain; that stretch reads IIGGSMDAKG…LKDWVQETMA (243 aa). Asn-148, Asn-182, and Asn-264 each carry an N-linked (GlcNAc...) asparagine glycan. Residues 259 to 264 form an interaction with CD163 region; sequence VPEKKN.

It belongs to the peptidase S1 family. Tetramer of two alpha and two beta chains; disulfide-linked. The hemoglobin/haptoglobin complex is composed of a haptoglobin dimer bound to two hemoglobin alpha-beta dimers. Interacts with CD163. Interacts with ERGIC3. Expressed by the liver and secreted in plasma.

It localises to the secreted. As a result of hemolysis, hemoglobin is found to accumulate in the kidney and is secreted in the urine. Haptoglobin captures, and combines with free plasma hemoglobin to allow hepatic recycling of heme iron and to prevent kidney damage. Haptoglobin also acts as an antioxidant, has antibacterial activity and plays a role in modulating many aspects of the acute phase response. Hemoglobin/haptoglobin complexes are rapidly cleared by the macrophage CD163 scavenger receptor expressed on the surface of liver Kupfer cells through an endocytic lysosomal degradation pathway. This is Haptoglobin (Hp) from Mus caroli (Ryukyu mouse).